A 282-amino-acid polypeptide reads, in one-letter code: Putative hydrolase Bcenmc03_4750 (282 aa).

Mg(2+) contacts are provided by Glu124, Glu126, and Asp155.

Belongs to the FAH family. Mg(2+) serves as cofactor.

The sequence is that of Putative hydrolase Bcenmc03_4750 from Burkholderia orbicola (strain MC0-3).